Here is a 1400-residue protein sequence, read N- to C-terminus: DNA-directed RNA polymerase subunit beta' (1400 aa).

Zn(2+)-binding residues include Cys71, Cys73, Cys86, and Cys89. 3 residues coordinate Mg(2+): Asp462, Asp464, and Asp466. Zn(2+) is bound by residues Cys811, Cys885, Cys892, and Cys895.

Belongs to the RNA polymerase beta' chain family. The RNAP catalytic core consists of 2 alpha, 1 beta, 1 beta' and 1 omega subunit. When a sigma factor is associated with the core the holoenzyme is formed, which can initiate transcription. Mg(2+) serves as cofactor. The cofactor is Zn(2+).

It carries out the reaction RNA(n) + a ribonucleoside 5'-triphosphate = RNA(n+1) + diphosphate. In terms of biological role, DNA-dependent RNA polymerase catalyzes the transcription of DNA into RNA using the four ribonucleoside triphosphates as substrates. This chain is DNA-directed RNA polymerase subunit beta', found in Brucella anthropi (strain ATCC 49188 / DSM 6882 / CCUG 24695 / JCM 21032 / LMG 3331 / NBRC 15819 / NCTC 12168 / Alc 37) (Ochrobactrum anthropi).